A 148-amino-acid chain; its full sequence is Large ribosomal subunit protein bL9 (148 aa).

It belongs to the bacterial ribosomal protein bL9 family.

In terms of biological role, binds to the 23S rRNA. In Agathobacter rectalis (strain ATCC 33656 / DSM 3377 / JCM 17463 / KCTC 5835 / VPI 0990) (Eubacterium rectale), this protein is Large ribosomal subunit protein bL9.